Consider the following 423-residue polypeptide: Phytoene synthase, chloroplastic (423 aa).

Residues 1-136 constitute a chloroplast transit peptide; it reads MVVAILRVVS…DAYDRCGEVC (136 aa).

This sequence belongs to the phytoene/squalene synthase family. In terms of assembly, monomer.

Its subcellular location is the plastid. It is found in the chloroplast. It catalyses the reaction 2 (2E,6E,10E)-geranylgeranyl diphosphate = 15-cis-phytoene + 2 diphosphate. The protein operates within carotenoid biosynthesis; phytoene biosynthesis; all-trans-phytoene from geranylgeranyl diphosphate: step 1/1. Catalyzes the reaction from prephytoene diphosphate to phytoene. This chain is Phytoene synthase, chloroplastic (PSY), found in Narcissus pseudonarcissus (Daffodil).